The primary structure comprises 212 residues: Spore germination lipase LipC (212 aa).

The active-site Nucleophile is S11. Substrate-binding residues include G50 and N82. Residues D186 and H189 contribute to the active site.

It belongs to the 'GDSL' lipolytic enzyme family.

The protein localises to the spore coat. Functionally, lipase involved in spore germination. The protein is Spore germination lipase LipC (lipC) of Bacillus licheniformis (strain ATCC 14580 / DSM 13 / JCM 2505 / CCUG 7422 / NBRC 12200 / NCIMB 9375 / NCTC 10341 / NRRL NRS-1264 / Gibson 46).